We begin with the raw amino-acid sequence, 212 residues long: Peptide methionine sulfoxide reductase MsrA (212 aa).

Residue Cys-52 is part of the active site.

Belongs to the MsrA Met sulfoxide reductase family.

The enzyme catalyses L-methionyl-[protein] + [thioredoxin]-disulfide + H2O = L-methionyl-(S)-S-oxide-[protein] + [thioredoxin]-dithiol. The catalysed reaction is [thioredoxin]-disulfide + L-methionine + H2O = L-methionine (S)-S-oxide + [thioredoxin]-dithiol. In terms of biological role, has an important function as a repair enzyme for proteins that have been inactivated by oxidation. Catalyzes the reversible oxidation-reduction of methionine sulfoxide in proteins to methionine. The protein is Peptide methionine sulfoxide reductase MsrA of Escherichia coli O127:H6 (strain E2348/69 / EPEC).